We begin with the raw amino-acid sequence, 21 residues long: thr operon leader peptide (21 aa).

This sequence belongs to the thr operon leader peptide family.

In terms of biological role, this protein is involved in control of the biosynthesis of threonine. The polypeptide is thr operon leader peptide (Salmonella choleraesuis (strain SC-B67)).